The chain runs to 100 residues: Small ribosomal subunit protein bS6 (100 aa).

This sequence belongs to the bacterial ribosomal protein bS6 family.

In terms of biological role, binds together with bS18 to 16S ribosomal RNA. The polypeptide is Small ribosomal subunit protein bS6 (Enterococcus faecalis (strain ATCC 700802 / V583)).